A 987-amino-acid chain; its full sequence is ATP-dependent 6-phosphofructokinase subunit alpha (987 aa).

Positions methionine 1 to isoleucine 602 are N-terminal catalytic PFK domain 1. ATP is bound by residues glycine 237, arginine 300 to cysteine 301, and glycine 330 to serine 333. A Mg(2+)-binding site is contributed by aspartate 331. Beta-D-fructose 6-phosphate is bound by residues serine 376–aspartate 378, arginine 413, methionine 420–arginine 422, glutamate 477, arginine 504, and histidine 510–arginine 513. Catalysis depends on aspartate 378, which acts as the Proton acceptor. The interdomain linker stretch occupies residues tyrosine 603–leucine 616. The segment at asparagine 617–tyrosine 987 is C-terminal regulatory PFK domain 2. Residues arginine 686, threonine 743–asparagine 747, arginine 781, glutamine 788–glycine 790, glutamate 848, arginine 874, histidine 880–glutamine 883, and arginine 958 contribute to the beta-D-fructose 2,6-bisphosphate site.

This sequence belongs to the phosphofructokinase type A (PFKA) family. ATP-dependent PFK group I subfamily. Eukaryotic two domain clade 'E' sub-subfamily. Heterooctamer of 4 alpha and 4 beta chains. Mg(2+) is required as a cofactor.

It is found in the cytoplasm. The enzyme catalyses beta-D-fructose 6-phosphate + ATP = beta-D-fructose 1,6-bisphosphate + ADP + H(+). It participates in carbohydrate degradation; glycolysis; D-glyceraldehyde 3-phosphate and glycerone phosphate from D-glucose: step 3/4. Allosterically activated by ADP, AMP, or fructose 2,6-bisphosphate, and allosterically inhibited by ATP or citrate. Catalyzes the phosphorylation of D-fructose 6-phosphate to fructose 1,6-bisphosphate by ATP, the first committing step of glycolysis. The sequence is that of ATP-dependent 6-phosphofructokinase subunit alpha (PFK1) from Candida albicans (Yeast).